A 103-amino-acid polypeptide reads, in one-letter code: MAAVTLNVSTLKPLGDRVLVKIAQQDEKTAGGIFLPDTAKEKPQVGEVVAVGPGKRNDEGKLIPMELKAGDRVLYSKYAGTEVKLGSDEYVLLAERDILAIVQ.

It belongs to the GroES chaperonin family. In terms of assembly, heptamer of 7 subunits arranged in a ring. Interacts with the chaperonin GroEL.

It localises to the cytoplasm. Functionally, together with the chaperonin GroEL, plays an essential role in assisting protein folding. The GroEL-GroES system forms a nano-cage that allows encapsulation of the non-native substrate proteins and provides a physical environment optimized to promote and accelerate protein folding. GroES binds to the apical surface of the GroEL ring, thereby capping the opening of the GroEL channel. The sequence is that of Co-chaperonin GroES from Synechococcus sp. (strain JA-3-3Ab) (Cyanobacteria bacterium Yellowstone A-Prime).